We begin with the raw amino-acid sequence, 249 residues long: Probable proteasome subunit alpha type-2 (249 aa).

The protein belongs to the peptidase T1A family. As to quaternary structure, the 26S proteasome consists of a 20S proteasome core and two 19S regulatory subunits. The 20S proteasome core is composed of 28 subunits that are arranged in four stacked rings, resulting in a barrel-shaped structure. The two end rings are each formed by seven alpha subunits, and the two central rings are each formed by seven beta subunits. The catalytic chamber with the active sites is on the inside of the barrel.

It is found in the cytoplasm. The protein resides in the nucleus. Functionally, the proteasome is a multicatalytic proteinase complex which is characterized by its ability to cleave peptides with Arg, Phe, Tyr, Leu, and Glu adjacent to the leaving group at neutral or slightly basic pH. The proteasome has an ATP-dependent proteolytic activity. The polypeptide is Probable proteasome subunit alpha type-2 (pca-2) (Neurospora crassa (strain ATCC 24698 / 74-OR23-1A / CBS 708.71 / DSM 1257 / FGSC 987)).